A 133-amino-acid polypeptide reads, in one-letter code: S-adenosylmethionine decarboxylase proenzyme (133 aa).

The active-site Schiff-base intermediate with substrate; via pyruvic acid is serine 64. Pyruvic acid (Ser); by autocatalysis is present on serine 64. Catalysis depends on histidine 69, which acts as the Proton acceptor; for processing activity. Cysteine 84 acts as the Proton donor; for catalytic activity in catalysis.

This sequence belongs to the prokaryotic AdoMetDC family. Type 1 subfamily. Heterotetramer of two alpha and two beta chains arranged as a dimer of alpha/beta heterodimers. Pyruvate serves as cofactor. Post-translationally, is synthesized initially as an inactive proenzyme. Formation of the active enzyme involves a self-maturation process in which the active site pyruvoyl group is generated from an internal serine residue via an autocatalytic post-translational modification. Two non-identical subunits are generated from the proenzyme in this reaction, and the pyruvate is formed at the N-terminus of the alpha chain, which is derived from the carboxyl end of the proenzyme. The post-translation cleavage follows an unusual pathway, termed non-hydrolytic serinolysis, in which the side chain hydroxyl group of the serine supplies its oxygen atom to form the C-terminus of the beta chain, while the remainder of the serine residue undergoes an oxidative deamination to produce ammonia and the pyruvoyl group blocking the N-terminus of the alpha chain.

It catalyses the reaction S-adenosyl-L-methionine + H(+) = S-adenosyl 3-(methylsulfanyl)propylamine + CO2. It participates in amine and polyamine biosynthesis; S-adenosylmethioninamine biosynthesis; S-adenosylmethioninamine from S-adenosyl-L-methionine: step 1/1. Functionally, catalyzes the decarboxylation of S-adenosylmethionine to S-adenosylmethioninamine (dcAdoMet), the propylamine donor required for the synthesis of the polyamines spermine and spermidine from the diamine putrescine. The sequence is that of S-adenosylmethionine decarboxylase proenzyme from Persephonella marina (strain DSM 14350 / EX-H1).